The following is a 325-amino-acid chain: Beta-ketoacyl-[acyl-carrier-protein] synthase III (325 aa).

Catalysis depends on residues Cys-112 and His-250. The tract at residues 251 to 255 (QANSR) is ACP-binding. The active site involves Asn-280.

The protein belongs to the thiolase-like superfamily. FabH family. Homodimer.

It is found in the cytoplasm. It carries out the reaction malonyl-[ACP] + acetyl-CoA + H(+) = 3-oxobutanoyl-[ACP] + CO2 + CoA. The protein operates within lipid metabolism; fatty acid biosynthesis. In terms of biological role, catalyzes the condensation reaction of fatty acid synthesis by the addition to an acyl acceptor of two carbons from malonyl-ACP. Catalyzes the first condensation reaction which initiates fatty acid synthesis and may therefore play a role in governing the total rate of fatty acid production. Possesses both acetoacetyl-ACP synthase and acetyl transacylase activities. Its substrate specificity determines the biosynthesis of branched-chain and/or straight-chain of fatty acids. The protein is Beta-ketoacyl-[acyl-carrier-protein] synthase III of Lactococcus lactis subsp. cremoris (strain MG1363).